The sequence spans 67 residues: Surface composition regulator (67 aa).

It belongs to the GlgS family.

Functionally, major determinant of cell surface composition. Negatively regulates motility, adhesion and synthesis of biofilm exopolysaccharides. The chain is Surface composition regulator from Salmonella paratyphi A (strain ATCC 9150 / SARB42).